The sequence spans 391 residues: Ethanol acetyltransferase 1 (391 aa).

A mitochondrion-targeting transit peptide spans 1–24; it reads MFFTKVLNNQVANGLKQLPVHKRV. The 107-residue stretch at 48–154 folds into the AB hydrolase-1 domain; it reads PIVFVHGIFG…DNSPIEQPHI (107 aa). Active-site charge relay system residues include Ser-121, Asp-145, and His-295.

This sequence belongs to the AB hydrolase superfamily.

It localises to the mitochondrion. It carries out the reaction ethanol + acetyl-CoA = ethyl acetate + CoA. It catalyses the reaction acetyl-CoA + H2O = acetate + CoA + H(+). The catalysed reaction is ethyl acetate + H2O = ethanol + acetate + H(+). With respect to regulation, by ethanol. Thioesterase and esterase reactions are highly repressed in the presence of high ethanol concentrations. Alcohol acetyltransferase that catalyzes the synthesis of ethyl acetate from ethanol and acetyl-CoA. Can also function as a thioesterase by hydrolyzing acetyl-CoA in the absence of ethanol, as well as esterase hydrolyzing ethyl acetate. The polypeptide is Ethanol acetyltransferase 1 (EAT1) (Wickerhamomyces anomalus (strain ATCC 58044 / CBS 1984 / NCYC 433 / NRRL Y-366-8) (Yeast)).